An 86-amino-acid chain; its full sequence is Small ribosomal subunit protein bS20 (86 aa).

The disordered stretch occupies residues 1-27 (MANNKSAKKRAIQAEKRRQHNASRRSM).

It belongs to the bacterial ribosomal protein bS20 family.

Functionally, binds directly to 16S ribosomal RNA. In Vibrio vulnificus (strain CMCP6), this protein is Small ribosomal subunit protein bS20.